Here is a 365-residue protein sequence, read N- to C-terminus: Chorismate synthase (365 aa).

NADP(+) is bound by residues Arg-48 and Arg-54. Residues 125–127 (RSS), 237–238 (NA), Gly-277, 292–296 (KPTSS), and Arg-318 each bind FMN.

This sequence belongs to the chorismate synthase family. In terms of assembly, homotetramer. It depends on FMNH2 as a cofactor.

The catalysed reaction is 5-O-(1-carboxyvinyl)-3-phosphoshikimate = chorismate + phosphate. The protein operates within metabolic intermediate biosynthesis; chorismate biosynthesis; chorismate from D-erythrose 4-phosphate and phosphoenolpyruvate: step 7/7. Catalyzes the anti-1,4-elimination of the C-3 phosphate and the C-6 proR hydrogen from 5-enolpyruvylshikimate-3-phosphate (EPSP) to yield chorismate, which is the branch point compound that serves as the starting substrate for the three terminal pathways of aromatic amino acid biosynthesis. This reaction introduces a second double bond into the aromatic ring system. This is Chorismate synthase from Paracidovorax citrulli (strain AAC00-1) (Acidovorax citrulli).